The chain runs to 532 residues: MRKTVAFGFVGTVLDYAGRGSQRWSKWRPTLCLCQQESLVIDRLELLHDARSRSLFETLKRDIASVSPETEVVSVEIELHNPWDFEEVYACLHDFARGYEFQPEKEDYLIHITTGTHVAQICWFLLAEARYLPARLIQSSPPRKKEQPRGPGEVTIIDLDLSRYNAIASRFAEERQQTLDFLKSGIATRNPHFNRMIEQIEKVAIKSRAPILLNGPTGAGKSFLARRILELKQARHQFSGAFVEVNCATLRGDTAMSTLFGHVKGAFTGARESREGLLRSANGGMLFLDEIGELGADEQAMLLKAIEEKTFYPFGSDRQVSSDFQLIAGTVRDLRQLVAEGKFREDLYARINLWTFTLPGLRQRQEDIEPNLDYEVERHASLTGDSVRFNTEARRAWLAFATSPQATWRGNFRELSASVTRMATFATSGRITLDVVEDEINRLRYNWQESRPSALTALLGAEAENIDLFDRMQLEHVIAICRQAKSLSAAGRQLFDVSRQGKASVNDADRLRKYLARFGLTWEAVQDQHSSS.

One can recognise a Sigma-54 factor interaction domain in the interval Ile186 to Thr424. ATP contacts are provided by residues Gly215–Ser222 and Ala281–Glu290. A DNA-binding region (H-T-H motif) is located at residues Lys485–Ser504.

In terms of biological role, transcriptional repressor of the rtcAB genes. Interacts with sigma-54. This is Transcriptional regulatory protein RtcR (rtcR) from Escherichia coli (strain K12).